The sequence spans 101 residues: Thylakoid-associated protein slr0729 (101 aa).

It localises to the cellular thylakoid membrane. The polypeptide is Thylakoid-associated protein slr0729 (Synechocystis sp. (strain ATCC 27184 / PCC 6803 / Kazusa)).